We begin with the raw amino-acid sequence, 131 residues long: Small ribosomal subunit protein uS8 (131 aa).

Residues 1–27 (MSMTDPVADMLTRIRNGQRASKNEVSM) are disordered.

This sequence belongs to the universal ribosomal protein uS8 family. Part of the 30S ribosomal subunit. Contacts proteins S5 and S12.

One of the primary rRNA binding proteins, it binds directly to 16S rRNA central domain where it helps coordinate assembly of the platform of the 30S subunit. The protein is Small ribosomal subunit protein uS8 of Thioalkalivibrio sulfidiphilus (strain HL-EbGR7).